The primary structure comprises 164 residues: Class I hydrophobin rodA (164 aa).

The signal sequence occupies residues 1–18 (MQFSISALVLGLAATVYA). Asparagine 50 carries an N-linked (GlcNAc...) asparagine glycan. 4 disulfides stabilise this stretch: cysteine 60–cysteine 138, cysteine 68–cysteine 132, cysteine 69–cysteine 109, and cysteine 139–cysteine 157.

This sequence belongs to the fungal hydrophobin family. In terms of assembly, self-assembles to form functional amyloid fibrils called rodlets. Self-assembly into fibrillar rodlets occurs spontaneously at hydrophobic:hydrophilic interfaces and the rodlets further associate laterally to form amphipathic monolayers.

It localises to the secreted. The protein localises to the cell wall. Its function is as follows. Aerial growth, conidiation, and dispersal of filamentous fungi in the environment rely upon a capability of their secreting small amphipathic proteins called hydrophobins (HPBs) with low sequence identity. Class I can self-assemble into an outermost layer of rodlet bundles on aerial cell surfaces, conferring cellular hydrophobicity that supports fungal growth, development and dispersal; whereas Class II form highly ordered films at water-air interfaces through intermolecular interactions but contribute nothing to the rodlet structure. RodA is a class I hydrophobin involved in the cell surface hydrophobicity. The surface rodlet layer of the conidial cell wall makes airborne conidia of filamentous fungi inert to both innate and adaptive immunity. The sequence is that of Class I hydrophobin rodA from Penicillium camemberti (strain FM 013).